The primary structure comprises 292 residues: Phosphoribosylaminoimidazole-succinocarboxamide synthase (292 aa).

This sequence belongs to the SAICAR synthetase family.

It carries out the reaction 5-amino-1-(5-phospho-D-ribosyl)imidazole-4-carboxylate + L-aspartate + ATP = (2S)-2-[5-amino-1-(5-phospho-beta-D-ribosyl)imidazole-4-carboxamido]succinate + ADP + phosphate + 2 H(+). Its pathway is purine metabolism; IMP biosynthesis via de novo pathway; 5-amino-1-(5-phospho-D-ribosyl)imidazole-4-carboxamide from 5-amino-1-(5-phospho-D-ribosyl)imidazole-4-carboxylate: step 1/2. In Elusimicrobium minutum (strain Pei191), this protein is Phosphoribosylaminoimidazole-succinocarboxamide synthase.